We begin with the raw amino-acid sequence, 1010 residues long: Phosphoenolpyruvate carboxylase (1010 aa).

Positions 1–18 (MIMRSPETSGASMPQSTA) are enriched in polar residues. Disordered stretches follow at residues 1 to 36 (MIMR…PGAG) and 132 to 154 (LRPS…PPLA). Active-site residues include H195 and K652. The segment at 967–986 (QNRQPPMSESPGTPEDRRTY) is disordered.

Belongs to the PEPCase type 1 family. Requires Mg(2+) as cofactor.

It carries out the reaction oxaloacetate + phosphate = phosphoenolpyruvate + hydrogencarbonate. Its function is as follows. Forms oxaloacetate, a four-carbon dicarboxylic acid source for the tricarboxylic acid cycle. The protein is Phosphoenolpyruvate carboxylase of Parasynechococcus marenigrum (strain WH8102).